Here is a 347-residue protein sequence, read N- to C-terminus: Druantia protein DruD (347 aa).

Its subcellular location is the cytoplasm. Component of antiviral defense system Druantia type I, composed of DruA, DruB, DruC, DruD and DruE. Expression of Druantia in E.coli (strain MG1655) confers resistance to phage lambda, SECphi18, SECphi27 and T4. This Escherichia coli (strain UMEA 4076-1) protein is Druantia protein DruD.